Reading from the N-terminus, the 304-residue chain is Glycosyltransferase AglE (304 aa).

Belongs to the glycosyltransferase 2 family.

The protein localises to the cell membrane. It functions in the pathway cell surface structure biogenesis; S-layer biogenesis. Its function is as follows. Involved in the assembly of a N-linked pentasaccharide that decorates the S-layer glycoprotein and flagellins. Catalyzes the addition to the dolichol phosphate carrier of the hexuronic acid found at position 4 of the pentasaccharide. This Haloferax volcanii (strain ATCC 29605 / DSM 3757 / JCM 8879 / NBRC 14742 / NCIMB 2012 / VKM B-1768 / DS2) (Halobacterium volcanii) protein is Glycosyltransferase AglE (aglE).